A 282-amino-acid chain; its full sequence is MASLGQILFWSIISIIIILAGAIALIIGFGISGRHSITVTTVASAGNIGEDGILSCTFEPDIKLSDIVIQWLKEGVLGLVHEFKEGKDELSEQDEMFRGRTAVFADQVIVGNASLRLKNVQLTDAGTYKCYIITSKGKGNANLEYKTGAFSMPEVNVDYNASSETLRCEAPRWFPQPTVVWASQVDQGANFSEVSNTSFELNSENVTMKVVSVLYNVTINNTYSCMIENDIAKATGDIKVTESEIKRRSHLQLLNSKASLCVSSFFAISWALLPLSPYLMLK.

The signal sequence occupies residues 1 to 24; sequence MASLGQILFWSIISIIIILAGAIA. Over 25–259 the chain is Extracellular; that stretch reads LIIGFGISGR…HLQLLNSKAS (235 aa). Ig-like V-type domains lie at 35–146 and 153–241; these read HSIT…LEYK and PEVN…IKVT. 2 cysteine pairs are disulfide-bonded: Cys56–Cys130 and Cys168–Cys225. Asn216 carries N-linked (GlcNAc...) asparagine glycosylation. Residues 260 to 280 traverse the membrane as a helical segment; sequence LCVSSFFAISWALLPLSPYLM. Residues 281-282 lie on the Cytoplasmic side of the membrane; that stretch reads LK.

This sequence belongs to the immunoglobulin superfamily. BTN/MOG family. N-glycosylated. Overexpressed in breast, ovarian, endometrial, renal cell (RCC) and non-small-cell lung cancers (NSCLC). Expressed on activated T- and B-cells, monocytes and dendritic cells, but not expressed in most normal tissues (at protein level). Widely expressed, including in kidney, liver, lung, ovary, placenta, spleen and testis.

It localises to the cell membrane. Negatively regulates T-cell-mediated immune response by inhibiting T-cell activation, proliferation, cytokine production and development of cytotoxicity. When expressed on the cell surface of tumor macrophages, plays an important role, together with regulatory T-cells (Treg), in the suppression of tumor-associated antigen-specific T-cell immunity. Involved in promoting epithelial cell transformation. This Homo sapiens (Human) protein is V-set domain-containing T-cell activation inhibitor 1.